The primary structure comprises 337 residues: tRNA N6-adenosine threonylcarbamoyltransferase (337 aa).

The Fe cation site is built by His-111 and His-115. Substrate is bound by residues 134-138 (LVSGG), Asp-167, Gly-180, and Asn-272. Residue Asp-300 participates in Fe cation binding.

The protein belongs to the KAE1 / TsaD family. It depends on Fe(2+) as a cofactor.

It is found in the cytoplasm. The enzyme catalyses L-threonylcarbamoyladenylate + adenosine(37) in tRNA = N(6)-L-threonylcarbamoyladenosine(37) in tRNA + AMP + H(+). Required for the formation of a threonylcarbamoyl group on adenosine at position 37 (t(6)A37) in tRNAs that read codons beginning with adenine. Is involved in the transfer of the threonylcarbamoyl moiety of threonylcarbamoyl-AMP (TC-AMP) to the N6 group of A37, together with TsaE and TsaB. TsaD likely plays a direct catalytic role in this reaction. The protein is tRNA N6-adenosine threonylcarbamoyltransferase of Citrobacter koseri (strain ATCC BAA-895 / CDC 4225-83 / SGSC4696).